The following is a 545-amino-acid chain: Glucose-6-phosphate isomerase (545 aa).

Glu351 functions as the Proton donor in the catalytic mechanism. Active-site residues include His382 and Lys510.

Belongs to the GPI family.

Its subcellular location is the cytoplasm. The enzyme catalyses alpha-D-glucose 6-phosphate = beta-D-fructose 6-phosphate. It participates in carbohydrate biosynthesis; gluconeogenesis. The protein operates within carbohydrate degradation; glycolysis; D-glyceraldehyde 3-phosphate and glycerone phosphate from D-glucose: step 2/4. Catalyzes the reversible isomerization of glucose-6-phosphate to fructose-6-phosphate. In Shewanella woodyi (strain ATCC 51908 / MS32), this protein is Glucose-6-phosphate isomerase.